Here is a 293-residue protein sequence, read N- to C-terminus: Ribosomal protein L11 methyltransferase (293 aa).

T146, G167, D189, and N230 together coordinate S-adenosyl-L-methionine.

Belongs to the methyltransferase superfamily. PrmA family.

It localises to the cytoplasm. The catalysed reaction is L-lysyl-[protein] + 3 S-adenosyl-L-methionine = N(6),N(6),N(6)-trimethyl-L-lysyl-[protein] + 3 S-adenosyl-L-homocysteine + 3 H(+). Its function is as follows. Methylates ribosomal protein L11. This chain is Ribosomal protein L11 methyltransferase, found in Colwellia psychrerythraea (strain 34H / ATCC BAA-681) (Vibrio psychroerythus).